The sequence spans 128 residues: Small ribosomal subunit protein uS11 (128 aa).

It belongs to the universal ribosomal protein uS11 family. As to quaternary structure, part of the 30S ribosomal subunit. Interacts with proteins S7 and S18. Binds to IF-3.

Functionally, located on the platform of the 30S subunit, it bridges several disparate RNA helices of the 16S rRNA. Forms part of the Shine-Dalgarno cleft in the 70S ribosome. The protein is Small ribosomal subunit protein uS11 of Methylococcus capsulatus (strain ATCC 33009 / NCIMB 11132 / Bath).